Reading from the N-terminus, the 125-residue chain is MPTIQQLVRFERQTSEKKTKSPALKSCPQRRGVCTRVYTTTPKKPNSALRKVARVRLTSGFEVTAYIPGIGHNIQEHSVVLIRGGRVKDLPGCRYHVVRGSLDASGVKDRKQGRSKYGGKRPKGD.

Residues 104–125 (ASGVKDRKQGRSKYGGKRPKGD) form a disordered region. Residues 113–125 (GRSKYGGKRPKGD) show a composition bias toward basic residues.

It belongs to the universal ribosomal protein uS12 family. In terms of assembly, part of the 30S ribosomal subunit.

The protein resides in the plastid. It is found in the chloroplast. With S4 and S5 plays an important role in translational accuracy. Located at the interface of the 30S and 50S subunits. This chain is Small ribosomal subunit protein uS12c (rps12), found in Emiliania huxleyi (Coccolithophore).